Reading from the N-terminus, the 260-residue chain is Thiazole synthase (260 aa).

K96 functions as the Schiff-base intermediate with DXP in the catalytic mechanism. 1-deoxy-D-xylulose 5-phosphate-binding positions include G157, 184-185, and 206-207; these read AG and NT.

Belongs to the ThiG family. In terms of assembly, homotetramer. Forms heterodimers with either ThiH or ThiS.

The protein localises to the cytoplasm. The catalysed reaction is [ThiS sulfur-carrier protein]-C-terminal-Gly-aminoethanethioate + 2-iminoacetate + 1-deoxy-D-xylulose 5-phosphate = [ThiS sulfur-carrier protein]-C-terminal Gly-Gly + 2-[(2R,5Z)-2-carboxy-4-methylthiazol-5(2H)-ylidene]ethyl phosphate + 2 H2O + H(+). It functions in the pathway cofactor biosynthesis; thiamine diphosphate biosynthesis. Functionally, catalyzes the rearrangement of 1-deoxy-D-xylulose 5-phosphate (DXP) to produce the thiazole phosphate moiety of thiamine. Sulfur is provided by the thiocarboxylate moiety of the carrier protein ThiS. In vitro, sulfur can be provided by H(2)S. The chain is Thiazole synthase from Rhodopseudomonas palustris (strain BisB18).